The primary structure comprises 204 residues: Methyl-CpG-binding domain-containing protein 1 (204 aa).

Residues 1–46 are disordered; it reads MLPFPAMNLKKSRSENSSVASSGSKIEEQTEKSAEPTTIKVQKKAG. The span at 15 to 24 shows a compositional bias: polar residues; that stretch reads ENSSVASSGS. A compositionally biased stretch (basic and acidic residues) spans 25–34; the sequence is KIEEQTEKSA. A CW-type zinc finger spans residues 49 to 104; the sequence is GRSIDVFAVQCEKCMKWRKIDTQDEYEDIRSRVQEDPFFCKTKEGVSCEDVGDLNY. The short motif at 58–96 is the MBD-associated domain (MAD) element; the sequence is QCEKCMKWRKIDTQDEYEDIRSRVQEDPFFCKTKEGVSC. The Zn(2+) site is built by C59, C62, C88, and C96. Positions 110-180 constitute an MBD domain; that stretch reads WVIDKPGLPR…GDFNFTVPKV (71 aa).

In terms of tissue distribution, mostly expressed in flowers and buds.

It is found in the nucleus. Functionally, probable transcriptional regulator. The protein is Methyl-CpG-binding domain-containing protein 1 (MBD1) of Arabidopsis thaliana (Mouse-ear cress).